We begin with the raw amino-acid sequence, 427 residues long: 3-phosphoshikimate 1-carboxyvinyltransferase (427 aa).

3-phosphoshikimate contacts are provided by Lys22, Ser23, and Arg27. Lys22 lines the phosphoenolpyruvate pocket. Positions 96 and 124 each coordinate phosphoenolpyruvate. 3-phosphoshikimate contacts are provided by Ser169, Ser170, Gln171, Ser197, Asp313, Asn336, and Lys340. Phosphoenolpyruvate is bound at residue Gln171. Asp313 (proton acceptor) is an active-site residue. 3 residues coordinate phosphoenolpyruvate: Arg344, Arg386, and Lys411.

This sequence belongs to the EPSP synthase family. Monomer.

The protein resides in the cytoplasm. It carries out the reaction 3-phosphoshikimate + phosphoenolpyruvate = 5-O-(1-carboxyvinyl)-3-phosphoshikimate + phosphate. Its pathway is metabolic intermediate biosynthesis; chorismate biosynthesis; chorismate from D-erythrose 4-phosphate and phosphoenolpyruvate: step 6/7. Functionally, catalyzes the transfer of the enolpyruvyl moiety of phosphoenolpyruvate (PEP) to the 5-hydroxyl of shikimate-3-phosphate (S3P) to produce enolpyruvyl shikimate-3-phosphate and inorganic phosphate. This Salmonella newport (strain SL254) protein is 3-phosphoshikimate 1-carboxyvinyltransferase.